Consider the following 337-residue polypeptide: Ketol-acid reductoisomerase (NADP(+)) (337 aa).

A KARI N-terminal Rossmann domain is found at 3–183 (VEMFYDDDAD…GGARAGVIKT (181 aa)). Residues 26–29 (YGSQ), lysine 49, serine 52, serine 54, and 84–87 (DTAQ) contribute to the NADP(+) site. The active site involves histidine 109. Position 135 (glycine 135) interacts with NADP(+). Positions 184 to 329 (TFKEETETDL…KKLRDLMSWV (146 aa)) constitute a KARI C-terminal knotted domain. Residues aspartate 192, glutamate 196, glutamate 228, and glutamate 232 each contribute to the Mg(2+) site. Serine 253 contributes to the substrate binding site.

The protein belongs to the ketol-acid reductoisomerase family. It depends on Mg(2+) as a cofactor.

It catalyses the reaction (2R)-2,3-dihydroxy-3-methylbutanoate + NADP(+) = (2S)-2-acetolactate + NADPH + H(+). The catalysed reaction is (2R,3R)-2,3-dihydroxy-3-methylpentanoate + NADP(+) = (S)-2-ethyl-2-hydroxy-3-oxobutanoate + NADPH + H(+). Its pathway is amino-acid biosynthesis; L-isoleucine biosynthesis; L-isoleucine from 2-oxobutanoate: step 2/4. The protein operates within amino-acid biosynthesis; L-valine biosynthesis; L-valine from pyruvate: step 2/4. Its function is as follows. Involved in the biosynthesis of branched-chain amino acids (BCAA). Catalyzes an alkyl-migration followed by a ketol-acid reduction of (S)-2-acetolactate (S2AL) to yield (R)-2,3-dihydroxy-isovalerate. In the isomerase reaction, S2AL is rearranged via a Mg-dependent methyl migration to produce 3-hydroxy-3-methyl-2-ketobutyrate (HMKB). In the reductase reaction, this 2-ketoacid undergoes a metal-dependent reduction by NADPH to yield (R)-2,3-dihydroxy-isovalerate. This chain is Ketol-acid reductoisomerase (NADP(+)), found in Mycobacterium sp. (strain JLS).